The chain runs to 351 residues: Transmembrane protein 184 homolog DDB_G0279555 (351 aa).

A helical transmembrane segment spans residues 1 to 21 (MWIVAGVCSGVAILLSFYLIY). N-linked (GlcNAc...) asparagine glycosylation is present at Asn-26. A run of 5 helical transmembrane segments spans residues 39–59 (ILIMVPIYSVDSWLSLRFVEL), 73–93 (YVLYCFFSLIVAYIERDFDLV), 127–147 (FVLQFVFIKPIVAIISLVLET), 162–182 (YVWLTVVENISVGLSLYFLVL), and 206–226 (ILFFSFWQSIAISFLVYFGVI). The N-linked (GlcNAc...) asparagine glycan is linked to Asn-236. Residues 241-261 (LQDFITCVEMVILAICHHFFF) form a helical membrane-spanning segment. Residues Asn-301 and Asn-304 are each glycosylated (N-linked (GlcNAc...) asparagine). The interval 327–351 (HNHPTTKKKDEESNLLEPEDKDIII) is disordered. The span at 339–351 (SNLLEPEDKDIII) shows a compositional bias: acidic residues.

It belongs to the TMEM184 family.

It localises to the cell membrane. Functionally, probable transporter. This chain is Transmembrane protein 184 homolog DDB_G0279555 (tmem184C), found in Dictyostelium discoideum (Social amoeba).